The sequence spans 409 residues: Serine/threonine transporter SstT (409 aa).

Helical transmembrane passes span L24–F44, F48–I68, I82–M102, A142–L162, L194–G214, L218–V238, I292–M312, G319–C339, and V365–T385.

Belongs to the dicarboxylate/amino acid:cation symporter (DAACS) (TC 2.A.23) family.

It is found in the cell inner membrane. The enzyme catalyses L-serine(in) + Na(+)(in) = L-serine(out) + Na(+)(out). It carries out the reaction L-threonine(in) + Na(+)(in) = L-threonine(out) + Na(+)(out). In terms of biological role, involved in the import of serine and threonine into the cell, with the concomitant import of sodium (symport system). This chain is Serine/threonine transporter SstT, found in Neisseria meningitidis serogroup C (strain 053442).